The sequence spans 207 residues: MPRVALYNIQGQQVGEVDLDDSVFGGEVNEAVLHDAVVMQLASRRRGTAATRGWADVSGGGRKPWRQKGTGRARAGSIRSPLWRGGAVIFGPQPRDYGYRLPKKVRRLALRSALASKVRDGNIIVLDELKMEKPRTKDMAHILKNLNAENKALVVTATREPNVELSARNLPGVRFLTSDGINVYDLLAHDKLVITKDAVARVQEVLA.

Residues 52–77 (RGWADVSGGGRKPWRQKGTGRARAGS) are disordered.

The protein belongs to the universal ribosomal protein uL4 family. As to quaternary structure, part of the 50S ribosomal subunit.

Functionally, one of the primary rRNA binding proteins, this protein initially binds near the 5'-end of the 23S rRNA. It is important during the early stages of 50S assembly. It makes multiple contacts with different domains of the 23S rRNA in the assembled 50S subunit and ribosome. In terms of biological role, forms part of the polypeptide exit tunnel. This Moorella thermoacetica (strain ATCC 39073 / JCM 9320) protein is Large ribosomal subunit protein uL4.